The chain runs to 495 residues: Chromosomal replication initiator protein DnaA (495 aa).

The interval 1–83 (MSVALWQQCL…KVQLTVGSRR (83 aa)) is domain I, interacts with DnaA modulators. The tract at residues 83–158 (RNVAMSSPRD…QVEGSLKHQS (76 aa)) is domain II. The disordered stretch occupies residues 86 to 127 (AMSSPRDLGAPVSATTMNASRPTEAPAVHAAPRAKGDYADEQ). The domain III, AAA+ region stretch occupies residues 159–375 (GLNPNFTFET…GALKKVIADS (217 aa)). ATP-binding residues include glycine 203, glycine 205, lysine 206, and threonine 207. Positions 376–495 (HFMGKPITQD…YKNLLRLLTS (120 aa)) are domain IV, binds dsDNA.

The protein belongs to the DnaA family. As to quaternary structure, oligomerizes as a right-handed, spiral filament on DNA at oriC.

It is found in the cytoplasm. Functionally, plays an essential role in the initiation and regulation of chromosomal replication. ATP-DnaA binds to the origin of replication (oriC) to initiate formation of the DNA replication initiation complex once per cell cycle. Binds the DnaA box (a 9 base pair repeat at the origin) and separates the double-stranded (ds)DNA. Forms a right-handed helical filament on oriC DNA; dsDNA binds to the exterior of the filament while single-stranded (ss)DNA is stabiized in the filament's interior. The ATP-DnaA-oriC complex binds and stabilizes one strand of the AT-rich DNA unwinding element (DUE), permitting loading of DNA polymerase. After initiation quickly degrades to an ADP-DnaA complex that is not apt for DNA replication. Binds acidic phospholipids. This chain is Chromosomal replication initiator protein DnaA, found in Chromohalobacter salexigens (strain ATCC BAA-138 / DSM 3043 / CIP 106854 / NCIMB 13768 / 1H11).